The chain runs to 338 residues: mRNA decay activator protein ZFP36L1 (338 aa).

The tract at residues 1-111 (MTTTLVSATI…QKQPGSGQVN (111 aa)) is necessary and sufficient for the association with mRNA decay enzymes and mRNA decay activation. The residue at position 54 (Ser-54) is a Phosphoserine; by MAPKAPK2. Positions 71-113 (LKGEPAPSLSSRDSRFRDRSFSEGGERLLPTQKQPGSGQVNSS) are disordered. Positions 82–96 (RDSRFRDRSFSEGGE) are enriched in basic and acidic residues. Residue Ser-90 is modified to Phosphoserine; by PKB/AKT1. Ser-92 is modified (phosphoserine; by PKB/AKT1 and MAPKAPK2). A compositionally biased stretch (polar residues) spans 101-113 (TQKQPGSGQVNSS). 2 consecutive C3H1-type zinc fingers follow at residues 114 to 142 (RYKT…HGIH) and 152 to 180 (KYKT…HNAE). A necessary for mRNA decay activation region spans residues 185-338 (LAGGRDLSAD…IFSRLSISDD (154 aa)). Residue Ser-203 is modified to Phosphoserine; by PKB/AKT1 and MAPKAPK2. Residues 273-338 (SPTTFLFRPM…IFSRLSISDD (66 aa)) form a disordered region. Residues 305–318 (YLSSSSSSHSGSDS) are compositionally biased toward low complexity. Position 318 is a phosphoserine (Ser-318). The residue at position 334 (Ser-334) is a Phosphoserine; by RPS6KA1.

As to quaternary structure, associates with the cytoplasmic CCR4-NOT deadenylase and RNA exosome complexes to trigger ARE-containing mRNA deadenylation and decay processes. Interacts with CNOT1. Interacts (via N-terminus) with CNOT6. Interacts with CNOT7; this interaction is inhibited in response to phorbol 12-myristate 13-acetate (PMA) treatment in a p38 MAPK-dependent manner. Interacts with DCP1A. Interacts (via N-terminus) with DCP2. Interacts (via N-terminus) with EXOSC2. Interacts with XRN1. Interacts (via phosphorylated form) with YWHAB; this interaction occurs in a protein kinase AKT1-dependent manner. Interacts (via phosphorylated form) with YWHAZ; this interaction occurs in a p38 MAPK- and AKT-signaling pathways. In terms of processing, phosphorylated. Phosphorylated by RPS6KA1 at Ser-334 upon phorbol 12-myristate 13-acetate (PMA) treatment; this phosphorylation results in dissociation of the CCR4-NOT deadenylase complex and induces p38 MAPK-mediated stabilization of the low-density lipoprotein receptor LDLR mRNA. Phosphorylated by protein kinase AKT1 at Ser-92 and Ser-203 in response to insulin; these phosphorylations stabilize ZFP36L1, increase the association with 14-3-3 proteins and mediate ARE-containing mRNA stabilization. AKT1-mediated phosphorylation at Ser-92 does not impair ARE-containing RNA-binding. Phosphorylated at Ser-54, Ser-92 and Ser-203 by MAPKAPK2; these phosphorylations increase the association with 14-3-3 proteins and mediate ARE-containing mRNA stabilization in a protein kinase AKT1-independent manner. MAPKAPK2-mediated phosphorylations at Ser-54, Ser-92 and Ser-203 do not impair ARE-containing RNA-binding. Phosphorylations increase the association with 14-3-3 proteins and mediate ARE-containing mRNA stabilization during early adipogenesis in a p38 MAPK- and AKT-dependent manner. Post-translationally, ubiquitinated. Ubiquitination leads to proteasomal degradation, a process inhibited by phosphorylations at Ser-90, Ser-92 and Ser-203. Expressed in preadipocytes and adipocytes. Expressed in the proximal and distal tubules in the renal cortex (at protein level). Expressed in ovary, heart, kidney, lung, spleen and thymus. Weakly expressed in brain, liver and testis. Expressed in osteoblasts. Expressed in embryonic stem cells (ESCs). Expressed through B lymphocyte development.

It localises to the nucleus. Its subcellular location is the cytoplasm. The protein localises to the cytoplasmic granule. The protein resides in the P-body. Its function is as follows. Zinc-finger RNA-binding protein that destabilizes several cytoplasmic AU-rich element (ARE)-containing mRNA transcripts by promoting their poly(A) tail removal or deadenylation, and hence provide a mechanism for attenuating protein synthesis. Acts as a 3'-untranslated region (UTR) ARE mRNA-binding adapter protein to communicate signaling events to the mRNA decay machinery. Functions by recruiting the CCR4-NOT deadenylating complex and components of the cytoplasmic RNA decay machinery to the bound ARE-containing mRNAs, and hence promotes ARE-mediated mRNA deadenylation and decay processes. Also induces the degradation of ARE-containing mRNAs even in absence of poly(A) tail. Binds to 3'-UTR ARE of numerous mRNAs. Positively regulates early adipogenesis by promoting ARE-mediated mRNA decay of immediate early genes (IEGs). Promotes ARE-mediated mRNA decay of mineralocorticoid receptor NR3C2 mRNA in response to hypertonic stress. Negatively regulates hematopoietic/erythroid cell differentiation by promoting ARE-mediated mRNA decay of the transcription factor STAT5B mRNA. Positively regulates monocyte/macrophage cell differentiation by promoting ARE-mediated mRNA decay of the cyclin-dependent kinase CDK6 mRNA. Promotes degradation of ARE-containing pluripotency-associated mRNAs in embryonic stem cells (ESCs), such as NANOG, through a fibroblast growth factor (FGF)-induced MAPK-dependent signaling pathway, and hence attenuates ESC self-renewal and positively regulates mesendoderm differentiation. May play a role in mediating pro-apoptotic effects in malignant B-cells by promoting ARE-mediated mRNA decay of BCL2 mRNA. In association with ZFP36L2 maintains quiescence on developing B lymphocytes by promoting ARE-mediated decay of several mRNAs encoding cell cycle regulators that help B cells progress through the cell cycle, and hence ensuring accurate variable-diversity-joining (VDJ) recombination and functional immune cell formation. Together with ZFP36L2 is also necessary for thymocyte development and prevention of T-cell acute lymphoblastic leukemia (T-ALL) transformation by promoting ARE-mediated mRNA decay of the oncogenic transcription factor NOTCH1 mRNA. Involved in the delivery of target ARE-mRNAs to processing bodies (PBs). In addition to its cytosolic mRNA-decay function, plays a role in the regulation of nuclear mRNA 3'-end processing; modulates mRNA 3'-end maturation efficiency of the DLL4 mRNA through binding with an ARE embedded in a weak noncanonical polyadenylation (poly(A)) signal in endothelial cells. Also involved in the regulation of stress granule (SG) and P-body (PB) formation and fusion. Plays a role in vasculogenesis and endocardial development. Involved in the regulation of keratinocyte proliferation, differentiation and apoptosis. Plays a role in myoblast cell differentiation. The chain is mRNA decay activator protein ZFP36L1 from Mus musculus (Mouse).